The primary structure comprises 325 residues: Glycerol-3-phosphate dehydrogenase [NAD(P)+] (325 aa).

The NADPH site is built by S14, F15, R35, and K109. K109 and G137 together coordinate sn-glycerol 3-phosphate. A141 contributes to the NADPH binding site. The sn-glycerol 3-phosphate site is built by K192, D247, S257, R258, and N259. K192 functions as the Proton acceptor in the catalytic mechanism. R258 is a binding site for NADPH. The NADPH site is built by L282 and E284.

The protein belongs to the NAD-dependent glycerol-3-phosphate dehydrogenase family.

It localises to the cytoplasm. It carries out the reaction sn-glycerol 3-phosphate + NAD(+) = dihydroxyacetone phosphate + NADH + H(+). The enzyme catalyses sn-glycerol 3-phosphate + NADP(+) = dihydroxyacetone phosphate + NADPH + H(+). It participates in membrane lipid metabolism; glycerophospholipid metabolism. Its function is as follows. Catalyzes the reduction of the glycolytic intermediate dihydroxyacetone phosphate (DHAP) to sn-glycerol 3-phosphate (G3P), the key precursor for phospholipid synthesis. The protein is Glycerol-3-phosphate dehydrogenase [NAD(P)+] of Rickettsia africae (strain ESF-5).